We begin with the raw amino-acid sequence, 277 residues long: Collectin-10 (277 aa).

The first 27 residues, 1-27, serve as a signal peptide directing secretion; that stretch reads MSRKKEQQLRKYGTLVVLFIFQVQIFG. A disordered region spans residues 41–82; it reads THTILPGPKGDDGEKGDRGEVGKQGKVGPKGPKGNKGTVGDV. Residues 49–63 are compositionally biased toward basic and acidic residues; that stretch reads KGDDGEKGDRGEVGK. Residues 56-115 form the Collagen-like domain; it reads GDRGEVGKQGKVGPKGPKGNKGTVGDVGDQGMLGKIGPIGGKGDKGAKGISGVSGKKGKA. A compositionally biased stretch (low complexity) spans 64–79; that stretch reads QGKVGPKGPKGNKGTV. Residues 155–271 form the C-type lectin domain; sequence TDEKFYYIVK…CQVTIYFICE (117 aa). Cystine bridges form between C176–C270 and C248–C262. N-linked (GlcNAc...) asparagine glycosylation occurs at N258.

The protein belongs to the COLEC10/COLEC11 family. As to expression, widely expressed. Highly expressed in lung. Weakly expressed in larynx, syrinx and cranial air sac. Expressed throughout the lower gastrointestinal tract in increasing levels starting from a faint signal in duodenum and ending with relatively high signals in proctodeum, coprodeum and urodeum. In the upper part of the gastrointestinal tract, expressed in tongue, crop, and mucosa of the crop.

The protein localises to the secreted. It localises to the golgi apparatus. It is found in the cytoplasm. Lectin that binds to various sugars: galactose &gt; mannose = fucose &gt; N-acetylglucosamine &gt; N-acetylgalactosamine. Acts as a chemoattractant, probably involved in the regulation of cell migration. The chain is Collectin-10 (COLEC10) from Gallus gallus (Chicken).